The sequence spans 371 residues: Cytochrome b (371 aa).

4 consecutive transmembrane segments (helical) span residues 25 to 45, 69 to 90, 105 to 125, and 170 to 190; these read FGSL…FLAI, WIMQ…YTHI, WLSG…GYVL, and FFAL…IHII. Residues His75 and His89 each contribute to the heme b site. 2 residues coordinate heme b: His174 and His188. Residue His193 participates in a ubiquinone binding. Helical transmembrane passes span 218–238, 280–300, 312–332, and 339–358; these read YKDM…MTFA, LGGT…PFTH, LTQI…WTAT, and FIYI…IMNP.

Belongs to the cytochrome b family. The cytochrome bc1 complex contains 3 respiratory subunits (MT-CYB, CYC1 and UQCRFS1), 2 core proteins (UQCRC1 and UQCRC2) and probably 6 low-molecular weight proteins. Heme b is required as a cofactor.

The protein localises to the mitochondrion inner membrane. Its function is as follows. Component of the ubiquinol-cytochrome c reductase complex (complex III or cytochrome b-c1 complex) that is part of the mitochondrial respiratory chain. The b-c1 complex mediates electron transfer from ubiquinol to cytochrome c. Contributes to the generation of a proton gradient across the mitochondrial membrane that is then used for ATP synthesis. This is Cytochrome b (MT-CYB) from Micruroides euryxanthus (Sonoran coral snake).